Consider the following 444-residue polypeptide: Phosphoglucosamine mutase (444 aa).

The Phosphoserine intermediate role is filled by serine 103. Mg(2+) contacts are provided by serine 103, aspartate 241, aspartate 243, and aspartate 245. Residue serine 103 is modified to Phosphoserine.

The protein belongs to the phosphohexose mutase family. Mg(2+) serves as cofactor. In terms of processing, activated by phosphorylation.

The catalysed reaction is alpha-D-glucosamine 1-phosphate = D-glucosamine 6-phosphate. Functionally, catalyzes the conversion of glucosamine-6-phosphate to glucosamine-1-phosphate. This is Phosphoglucosamine mutase from Deinococcus radiodurans (strain ATCC 13939 / DSM 20539 / JCM 16871 / CCUG 27074 / LMG 4051 / NBRC 15346 / NCIMB 9279 / VKM B-1422 / R1).